Here is a 506-residue protein sequence, read N- to C-terminus: MSQENSVHRSSTKKTPIKIAFIHPDLGIGGAERLVVDAAVGLQSLGKEVVVFTSHCDKKHCFEEIRDGTIKVKVYGDWLPSSIFGRLSIFCSSLRQVYLTMILLTNYMHFDAIIVDQLSTCVPFLLLASQMILFYCHFPDKYLAKRGGILKKLYRIPFDTVEAESVRLADRIVVNSKFTASVFKKAFPKIRKPLRIVHPCVDIEAASKPLEFQLPEKILQRKLLISVNRFERKKDIRLAIDAFSALRDLSANRFPEYLLLVAGGYDIRVSENRRYLKELQEFCEQKDLSYTTVKDNWDNITVAPSTNVLFLLSVPSKVRDALISSSRILLYTPENEHFGIVPLEAMLRKVPVLAQTNGGPLETVIDGKNGWLRPRDAKIWGNVIYEATTSTTYDTAAMGEAGSEWVKNEFSTDAMARKFESEIMSGIRSITPEKRLMRRVNGLLAVFVLFMLFWGTCIIAATVPFAIIKLYFAQTYSSVKLGFMLGTCIVSVSFLTFTVYAKLTNL.

The next 2 membrane-spanning stretches (helical) occupy residues 82 to 104 (SIFG…MILL) and 118 to 138 (LSTC…YCHF). N-linked (GlcNAc...) asparagine glycosylation is present at N299. 2 consecutive transmembrane segments (helical) span residues 443-463 (LLAV…AATV) and 481-501 (LGFM…TVYA).

The protein belongs to the glycosyltransferase group 1 family. Glycosyltransferase 4 subfamily.

It localises to the endoplasmic reticulum membrane. It carries out the reaction a beta-D-Man-(1-&gt;4)-beta-D-GlcNAc-(1-&gt;4)-alpha-D-GlcNAc-diphospho-di-trans,poly-cis-dolichol + GDP-alpha-D-mannose = an alpha-D-Man-(1-&gt;3)-beta-D-Man-(1-&gt;4)-beta-D-GlcNAc-(1-&gt;4)-alpha-D-GlcNAc-diphospho-di-trans,poly-cis-dolichol + GDP + H(+). The catalysed reaction is an alpha-D-Man-(1-&gt;3)-beta-D-Man-(1-&gt;4)-beta-D-GlcNAc-(1-&gt;4)-alpha-D-GlcNAc-diphospho-di-trans,poly-cis-dolichol + GDP-alpha-D-mannose = an alpha-D-Man-(1-&gt;3)-[alpha-D-Man-(1-&gt;6)]-beta-D-Man-(1-&gt;4)-beta-D-GlcNAc-(1-&gt;4)-alpha-D-GlcNAc-diphospho-di-trans,poly-cis-dolichol + GDP + H(+). The protein operates within protein modification; protein glycosylation. Its function is as follows. Mannosylates Man(2)GlcNAc(2)-dolichol diphosphate and Man(1)GlcNAc(2)-dolichol diphosphate to form Man(3)GlcNAc(2)-dolichol diphosphate. The chain is Alpha-1,3/1,6-mannosyltransferase alg2 (alg2) from Schizosaccharomyces pombe (strain 972 / ATCC 24843) (Fission yeast).